A 327-amino-acid chain; its full sequence is Phenylalanine--tRNA ligase alpha subunit (327 aa).

Mg(2+) is bound at residue glutamate 252.

It belongs to the class-II aminoacyl-tRNA synthetase family. Phe-tRNA synthetase alpha subunit type 1 subfamily. As to quaternary structure, tetramer of two alpha and two beta subunits. It depends on Mg(2+) as a cofactor.

The protein localises to the cytoplasm. It catalyses the reaction tRNA(Phe) + L-phenylalanine + ATP = L-phenylalanyl-tRNA(Phe) + AMP + diphosphate + H(+). This chain is Phenylalanine--tRNA ligase alpha subunit, found in Shewanella oneidensis (strain ATCC 700550 / JCM 31522 / CIP 106686 / LMG 19005 / NCIMB 14063 / MR-1).